Here is a 125-residue protein sequence, read N- to C-terminus: UPF0102 protein CCNA_00142 (125 aa).

Belongs to the UPF0102 family.

The protein is UPF0102 protein CCNA_00142 of Caulobacter vibrioides (strain NA1000 / CB15N) (Caulobacter crescentus).